A 329-amino-acid polypeptide reads, in one-letter code: Probable carboxylesterase 13 (329 aa).

The residue at position 1 (methionine 1) is an N-acetylmethionine. An Involved in the stabilization of the negatively charged intermediate by the formation of the oxyanion hole motif is present at residues 81–83 (HGG). Catalysis depends on residues serine 165, aspartate 269, and histidine 302.

The protein belongs to the 'GDXG' lipolytic enzyme family. Expressed in flowers.

It catalyses the reaction a carboxylic ester + H2O = an alcohol + a carboxylate + H(+). Its function is as follows. Carboxylesterase acting on esters with varying acyl chain length. The sequence is that of Probable carboxylesterase 13 (CXE13) from Arabidopsis thaliana (Mouse-ear cress).